Here is a 346-residue protein sequence, read N- to C-terminus: tRNA N6-adenosine threonylcarbamoyltransferase (346 aa).

Fe cation-binding residues include histidine 111 and histidine 115. Substrate contacts are provided by residues 134–138 (LVSGG), aspartate 167, glycine 180, aspartate 184, and asparagine 280. Aspartate 308 contacts Fe cation.

Belongs to the KAE1 / TsaD family. Requires Fe(2+) as cofactor.

It localises to the cytoplasm. The enzyme catalyses L-threonylcarbamoyladenylate + adenosine(37) in tRNA = N(6)-L-threonylcarbamoyladenosine(37) in tRNA + AMP + H(+). Required for the formation of a threonylcarbamoyl group on adenosine at position 37 (t(6)A37) in tRNAs that read codons beginning with adenine. Is involved in the transfer of the threonylcarbamoyl moiety of threonylcarbamoyl-AMP (TC-AMP) to the N6 group of A37, together with TsaE and TsaB. TsaD likely plays a direct catalytic role in this reaction. This is tRNA N6-adenosine threonylcarbamoyltransferase from Crocosphaera subtropica (strain ATCC 51142 / BH68) (Cyanothece sp. (strain ATCC 51142)).